Consider the following 298-residue polypeptide: MDSVTPTLPRNILSIQSWVSYGHVGNAAAIFPLQRLGFEVWGVHTVQFSNHTGYGAWTGPVFEPGVIAELLDGIEARGVLPQCDGVLSGYVGSGGTVAAVVGAVGRVRQAHPQALYCCDPVMGDVGRGVFVHPDLPALIAAQAIPAADIVTPNQFELELLTGQKVETLADALAAAHALRERLNPAGPRIVLLTSLVRADAPASSIETLAVTGEGSWLCRTPLLPLDPPRNGTGDAIAALFYGQFLRTGSAEQALTLSMSALYALLDLTHRLGTREIQLVAAQGEFERPRHLFAAERVE.

Residue S17 coordinates substrate. ATP-binding residues include D119 and E156. D234 contacts substrate.

This sequence belongs to the pyridoxine kinase family. PdxY subfamily. Homodimer. Mg(2+) is required as a cofactor.

The enzyme catalyses pyridoxal + ATP = pyridoxal 5'-phosphate + ADP + H(+). Its pathway is cofactor metabolism; pyridoxal 5'-phosphate salvage; pyridoxal 5'-phosphate from pyridoxal: step 1/1. Functionally, pyridoxal kinase involved in the salvage pathway of pyridoxal 5'-phosphate (PLP). Catalyzes the phosphorylation of pyridoxal to PLP. The protein is Pyridoxal kinase PdxY of Deinococcus radiodurans (strain ATCC 13939 / DSM 20539 / JCM 16871 / CCUG 27074 / LMG 4051 / NBRC 15346 / NCIMB 9279 / VKM B-1422 / R1).